The primary structure comprises 208 residues: MKKRFSAKLFSALVLSISFFSAANAASPKDELNKRLAMNEGFSADFSQQVISPEGETVMEGEGTVEIARPSLFRWSTTFPDENLLVSDGKTLWYYSPFIEQVSIYWQEQATEQTPFVLLTRNRASDWDNYKISQKGNEFTLIPTAVDSTQGQFQINIDAKGVVKGFNVIEQDGQKGLFTFSNVKLGKPKADRFTFTVPKGVEVDDQRN.

The N-terminal stretch at 1-25 (MKKRFSAKLFSALVLSISFFSAANA) is a signal peptide.

The protein belongs to the LolA family. In terms of assembly, monomer.

It localises to the periplasm. Its function is as follows. Participates in the translocation of lipoproteins from the inner membrane to the outer membrane. Only forms a complex with a lipoprotein if the residue after the N-terminal Cys is not an aspartate (The Asp acts as a targeting signal to indicate that the lipoprotein should stay in the inner membrane). This is Outer-membrane lipoprotein carrier protein from Vibrio parahaemolyticus serotype O3:K6 (strain RIMD 2210633).